Consider the following 842-residue polypeptide: Glycogen phosphorylase, muscle form (842 aa).

S2 bears the N-acetylserine mark. S15 carries the phosphoserine; by PHK; in form phosphorylase A modification. AMP is bound by residues D43 and Y76. Phosphotyrosine occurs at positions 204 and 227. 310–319 (RRFKSSKFGC) lines the AMP pocket. The residue at position 430 (S430) is a Phosphoserine. Y473 is subject to Phosphotyrosine. Position 681 is an N6-(pyridoxal phosphate)lysine (K681). A phosphoserine mark is found at S747 and S748.

The protein belongs to the glycogen phosphorylase family. As to quaternary structure, homodimer. Homotetramer; to form the enzymatically active phosphorylase A. It depends on pyridoxal 5'-phosphate as a cofactor. In terms of processing, phosphorylation of Ser-15 converts phosphorylase B (unphosphorylated) to phosphorylase A.

It carries out the reaction [(1-&gt;4)-alpha-D-glucosyl](n) + phosphate = [(1-&gt;4)-alpha-D-glucosyl](n-1) + alpha-D-glucose 1-phosphate. With respect to regulation, allosterically regulated through the non-covalent binding of metabolites, being activated by AMP and inhibited by ATP, ADP, and glucose-6-phosphate. The activity is also controlled by post-translational modifications including phosphorylation. Functionally, allosteric enzyme that catalyzes the rate-limiting step in glycogen catabolism, the phosphorolytic cleavage of glycogen to produce glucose-1-phosphate, and plays a central role in maintaining cellular and organismal glucose homeostasis. This Ovis aries (Sheep) protein is Glycogen phosphorylase, muscle form.